We begin with the raw amino-acid sequence, 182 residues long: Ribosome maturation factor RimM (182 aa).

Residues 103–182 (EDDYYWKDLM…RVEVDWDPGF (80 aa)) enclose the PRC barrel domain.

It belongs to the RimM family. As to quaternary structure, binds ribosomal protein uS19.

The protein resides in the cytoplasm. Functionally, an accessory protein needed during the final step in the assembly of 30S ribosomal subunit, possibly for assembly of the head region. Essential for efficient processing of 16S rRNA. May be needed both before and after RbfA during the maturation of 16S rRNA. It has affinity for free ribosomal 30S subunits but not for 70S ribosomes. The protein is Ribosome maturation factor RimM of Yersinia pestis (strain Pestoides F).